Consider the following 184-residue polypeptide: RNA 2',3'-cyclic phosphodiesterase (184 aa).

Catalysis depends on His-42, which acts as the Proton donor. 2 consecutive short sequence motifs (HXTX) follow at residues His-42–Leu-45 and His-127–Val-130. His-127 functions as the Proton acceptor in the catalytic mechanism.

The protein belongs to the 2H phosphoesterase superfamily. ThpR family.

The enzyme catalyses a 3'-end 2',3'-cyclophospho-ribonucleotide-RNA + H2O = a 3'-end 2'-phospho-ribonucleotide-RNA + H(+). Functionally, hydrolyzes RNA 2',3'-cyclic phosphodiester to an RNA 2'-phosphomonoester. The polypeptide is RNA 2',3'-cyclic phosphodiesterase (Methanothermobacter thermautotrophicus (strain ATCC 29096 / DSM 1053 / JCM 10044 / NBRC 100330 / Delta H) (Methanobacterium thermoautotrophicum)).